We begin with the raw amino-acid sequence, 470 residues long: Nuclear receptor ROR-beta (470 aa).

The nuclear receptor DNA-binding region spans 18 to 93 (VIPCKICGDK…LGMSRDAVKF (76 aa)). NR C4-type zinc fingers lie at residues 21 to 41 (CKIC…CEGC) and 57 to 81 (CPRQ…LQKC). Residues 104-117 (LYAEVQKHQQRLQE) show a composition bias toward basic and acidic residues. The tract at residues 104–127 (LYAEVQKHQQRLQEQRQQQSGEAE) is disordered. The 239-residue stretch at 222–460 (EIDRIAQNII…TLFPPLYKEL (239 aa)) folds into the NR LBD domain. Residues 456 to 461 (LYKELF) carry the AF-2 motif.

This sequence belongs to the nuclear hormone receptor family. NR1 subfamily. Monomer. Interacts with CRX. As to expression, isoform 2 expressed with circadian rhythm in eye and pineal gland. Isoform 1 expressed in retina cortex, thalamus, and hypothalamus.

It is found in the nucleus. The protein resides in the nucleoplasm. Nuclear receptor that binds DNA as a monomer to ROR response elements (RORE) containing a single core motif half-site 5'-AGGTCA-3' preceded by a short A-T-rich sequence. Considered to have intrinsic transcriptional activity, have some natural ligands such as all-trans retinoic acid (ATRA) and other retinoids which act as inverse agonists repressing the transcriptional activity. Required for normal postnatal development of rod and cone photoreceptor cells. Modulates rod photoreceptors differentiation at least by inducing the transcription factor NRL-mediated pathway. In cone photoreceptor cells, regulates transcription of OPN1SW. Involved in the regulation of the period length and stability of the circadian rhythm. May control cytoarchitectural patterning of neocortical neurons during development. May act in a dose-dependent manner to regulate barrel formation upon innervation of layer IV neurons by thalamocortical axons. May play a role in the suppression of osteoblastic differentiation through the inhibition of RUNX2 transcriptional activity. Its function is as follows. Critical for hindlimb motor control and for the differentiation of amacrine and horizontal cells in the retina. Regulates the expression of PTF1A synergistically with FOXN4. This chain is Nuclear receptor ROR-beta (Rorb), found in Rattus norvegicus (Rat).